The chain runs to 337 residues: Large ribosomal subunit protein uL3 (337 aa).

Belongs to the universal ribosomal protein uL3 family. Part of the 50S ribosomal subunit. Forms a cluster with proteins L14 and L24e.

Functionally, one of the primary rRNA binding proteins, it binds directly near the 3'-end of the 23S rRNA, where it nucleates assembly of the 50S subunit. The sequence is that of Large ribosomal subunit protein uL3 from Methanosphaerula palustris (strain ATCC BAA-1556 / DSM 19958 / E1-9c).